The primary structure comprises 538 residues: uncharacterized protein (538 aa).

The segment covering 1–13 (MYNNNSSTSSDSS) has biased composition (low complexity). The segment at 1 to 43 (MYNNNSSTSSDSSNSEEKANAQHASSTDSTSEHTDPAVADEGF) is disordered. A run of 12 helical transmembrane segments spans residues 97–117 (ILHV…SSVF), 134–154 (VALL…ILWA), 163–183 (KIPL…VAVA), 194–214 (FFSG…FADM), 226–246 (IFAC…GFLA), 254–274 (WTEY…LFMK), 328–348 (PIVF…YLLL), 367–387 (ALPY…IAYF), 408–428 (LPPM…LAWS), 434–454 (VHWI…LTIF), 458–478 (LIYL…ANTI), and 504–524 (GSLL…FFIF).

The protein belongs to the major facilitator superfamily. CAR1 family.

Its subcellular location is the endoplasmic reticulum. It is found in the membrane. This is an uncharacterized protein from Schizosaccharomyces pombe (strain 972 / ATCC 24843) (Fission yeast).